Here is a 903-residue protein sequence, read N- to C-terminus: Alanine--tRNA ligase (903 aa).

Zn(2+) contacts are provided by histidine 591, histidine 595, cysteine 695, and histidine 699.

Belongs to the class-II aminoacyl-tRNA synthetase family. Zn(2+) is required as a cofactor.

It is found in the cytoplasm. It catalyses the reaction tRNA(Ala) + L-alanine + ATP = L-alanyl-tRNA(Ala) + AMP + diphosphate. Its function is as follows. Catalyzes the attachment of alanine to tRNA(Ala) in a two-step reaction: alanine is first activated by ATP to form Ala-AMP and then transferred to the acceptor end of tRNA(Ala). Also edits incorrectly charged Ser-tRNA(Ala) and Gly-tRNA(Ala) via its editing domain. This chain is Alanine--tRNA ligase, found in Methanosphaera stadtmanae (strain ATCC 43021 / DSM 3091 / JCM 11832 / MCB-3).